Here is a 373-residue protein sequence, read N- to C-terminus: Queuine tRNA-ribosyltransferase (373 aa).

D91 functions as the Proton acceptor in the catalytic mechanism. Substrate contacts are provided by residues 91 to 95, D145, Q187, and G214; that span reads DSGGF. The RNA binding stretch occupies residues 245–251; that stretch reads GVGKPED. The active-site Nucleophile is D264. Positions 269 to 273 are RNA binding; important for wobble base 34 recognition; the sequence is TRNAR. Zn(2+) contacts are provided by C302, C304, C307, and H333.

This sequence belongs to the queuine tRNA-ribosyltransferase family. In terms of assembly, homodimer. Within each dimer, one monomer is responsible for RNA recognition and catalysis, while the other monomer binds to the replacement base PreQ1. Zn(2+) serves as cofactor.

It carries out the reaction 7-aminomethyl-7-carbaguanine + guanosine(34) in tRNA = 7-aminomethyl-7-carbaguanosine(34) in tRNA + guanine. It functions in the pathway tRNA modification; tRNA-queuosine biosynthesis. Functionally, catalyzes the base-exchange of a guanine (G) residue with the queuine precursor 7-aminomethyl-7-deazaguanine (PreQ1) at position 34 (anticodon wobble position) in tRNAs with GU(N) anticodons (tRNA-Asp, -Asn, -His and -Tyr). Catalysis occurs through a double-displacement mechanism. The nucleophile active site attacks the C1' of nucleotide 34 to detach the guanine base from the RNA, forming a covalent enzyme-RNA intermediate. The proton acceptor active site deprotonates the incoming PreQ1, allowing a nucleophilic attack on the C1' of the ribose to form the product. After dissociation, two additional enzymatic reactions on the tRNA convert PreQ1 to queuine (Q), resulting in the hypermodified nucleoside queuosine (7-(((4,5-cis-dihydroxy-2-cyclopenten-1-yl)amino)methyl)-7-deazaguanosine). This Idiomarina loihiensis (strain ATCC BAA-735 / DSM 15497 / L2-TR) protein is Queuine tRNA-ribosyltransferase.